The chain runs to 278 residues: Tryptophan synthase alpha chain (278 aa).

Active-site proton acceptor residues include Glu-50 and Asp-61.

Belongs to the TrpA family. As to quaternary structure, tetramer of two alpha and two beta chains.

The enzyme catalyses (1S,2R)-1-C-(indol-3-yl)glycerol 3-phosphate + L-serine = D-glyceraldehyde 3-phosphate + L-tryptophan + H2O. Its pathway is amino-acid biosynthesis; L-tryptophan biosynthesis; L-tryptophan from chorismate: step 5/5. Its function is as follows. The alpha subunit is responsible for the aldol cleavage of indoleglycerol phosphate to indole and glyceraldehyde 3-phosphate. The polypeptide is Tryptophan synthase alpha chain (Methylobacterium nodulans (strain LMG 21967 / CNCM I-2342 / ORS 2060)).